The primary structure comprises 356 residues: Guanine nucleotide-binding protein alpha-15 subunit (356 aa).

G2 carries the N-myristoyl glycine lipid modification. C5 carries S-palmitoyl cysteine lipidation. In terms of domain architecture, G-alpha spans 33-356 (GNQKLLLLGT…GRNLRGTGME (324 aa)). Residues 36-49 (KLLLLGTGECGKST) are G1 motif. GTP is bound by residues 41 to 48 (GTGECGKS), 177 to 183 (LRIRIPT), 202 to 206 (DVGGQ), 271 to 274 (NKRD), and A328. Residues S48 and T183 each coordinate Mg(2+). A G2 motif region spans residues 175 to 183 (DMLRIRIPT). The tract at residues 198-207 (FRIFDVGGQR) is G3 motif. The segment at 267-274 (ILFLNKRD) is G4 motif. The tract at residues 326-331 (TCATDT) is G5 motif.

The protein belongs to the G-alpha family. G proteins are composed of 3 units; alpha, beta and gamma. The alpha chain contains the guanine nucleotide binding site.

In terms of biological role, guanine nucleotide-binding proteins (G proteins) are involved as modulators or transducers in various transmembrane signaling systems. The polypeptide is Guanine nucleotide-binding protein alpha-15 subunit (gpa-15) (Caenorhabditis briggsae).